The chain runs to 350 residues: Ferredoxin--NADP reductase (350 aa).

FAD-binding residues include Thr25, Glu44, Gln52, Tyr57, Val97, Phe132, Asp298, and Ser339.

Belongs to the ferredoxin--NADP reductase type 2 family. In terms of assembly, homodimer. The cofactor is FAD.

The catalysed reaction is 2 reduced [2Fe-2S]-[ferredoxin] + NADP(+) + H(+) = 2 oxidized [2Fe-2S]-[ferredoxin] + NADPH. This chain is Ferredoxin--NADP reductase, found in Chlorobium limicola (strain DSM 245 / NBRC 103803 / 6330).